The primary structure comprises 484 residues: Monocarboxylate transporter 2 (484 aa).

At 1–16 (MPSEPSAPLPQPLPPD) the chain is on the cytoplasmic side. Residues 17-37 (GGWGWVVVCASFISIGFSYAF) form a helical membrane-spanning segment. Over 38–60 (PKAVTVFFKDIQEIFNTTSSQIA) the chain is Extracellular. A helical membrane pass occupies residues 61 to 81 (WISSIMLAVMYAGGPISSVLV). At 82–90 (NNYGSRPVV) the chain is on the cytoplasmic side. A helical transmembrane segment spans residues 91 to 111 (IVGGLLCCIGMILASYSNSVI). Residues 112 to 116 (ELYLT) are Extracellular-facing. The chain crosses the membrane as a helical span at residues 117–137 (VGFIGGLGLAFNLQPALTIIG). The Cytoplasmic portion of the chain corresponds to 138-149 (KYFYRRRPLANG). A helical transmembrane segment spans residues 150-170 (CAMAGSPVFLSTLAPFNQYLF). Over 171–174 (NNYG) the chain is Extracellular. The chain crosses the membrane as a helical span at residues 175 to 195 (WKGSFLILGGIFLHSCVAGCL). At 196 to 245 (MRPVGPSPNTKKSKSKVGSRHDSTLKKASKVSTAQKVNRFLDFSLFMHRG) the chain is on the cytoplasmic side. A helical transmembrane segment spans residues 246–266 (FLIYLSGNVILFLGIFAPIIF). At 267–281 (LAQYAKHIGVDDYNS) the chain is on the extracellular side. A helical transmembrane segment spans residues 282–302 (AFLLSVMAFIDMFARPSVGLI). Residues 303-311 (ANTSLIRPR) are Cytoplasmic-facing. The helical transmembrane segment at 312–332 (IQYLFSSAIIFTGICHLLCPL) threads the bilayer. Residues 333–337 (ATTYS) are Extracellular-facing. The helical transmembrane segment at 338–358 (ALVVYVVFFGLGFGSISSLLF) threads the bilayer. The Cytoplasmic portion of the chain corresponds to 359-372 (ECLMDIVGATRFSS). A helical membrane pass occupies residues 373 to 393 (AVGLTTIVECCPVLFGPPLAG). Over 394–405 (KLLDITGEYKYL) the chain is Extracellular. The helical transmembrane segment at 406–426 (YIASGTVVLVSGTYLLIGNAI) threads the bilayer. Over 427–484 (NYRLLDKERKREKAKKKKSASHASREMEALNRSKQDEVTVKASNAHNPPSDRDKESNI) the chain is Cytoplasmic. A disordered region spans residues 438-484 (EKAKKKKSASHASREMEALNRSKQDEVTVKASNAHNPPSDRDKESNI). Composition is skewed to basic and acidic residues over residues 449-465 (ASRE…DEVT) and 475-484 (PSDRDKESNI).

This sequence belongs to the major facilitator superfamily. Monocarboxylate porter (TC 2.A.1.13) family. In terms of assembly, homodimer. Interacts with GRID2IP. Interacts with EMB; interaction mediates SLC16A7 targeting to the plasma membrane. Interacts with isoform 2 of BSG. Detected in testis and in spermatozoa (at protein level).

It localises to the cell membrane. Its subcellular location is the cytoplasm. The protein localises to the basolateral cell membrane. It carries out the reaction (S)-lactate(in) + H(+)(in) = (S)-lactate(out) + H(+)(out). It catalyses the reaction 3-methyl-2-oxobutanoate(out) + H(+)(out) = 3-methyl-2-oxobutanoate(in) + H(+)(in). The catalysed reaction is acetoacetate(out) + H(+)(out) = acetoacetate(in) + H(+)(in). The enzyme catalyses (R)-3-hydroxybutanoate(out) + H(+)(out) = (R)-3-hydroxybutanoate(in) + H(+)(in). It carries out the reaction 4-methyl-2-oxopentanoate(out) + H(+)(out) = 4-methyl-2-oxopentanoate(in) + H(+)(in). It catalyses the reaction pyruvate(out) + H(+)(out) = pyruvate(in) + H(+)(in). The catalysed reaction is (S)-3-hydroxybutanoate(out) + H(+)(out) = (S)-3-hydroxybutanoate(in) + H(+)(in). Transport activity exhibits steep dependence on substrate concentration. Substrate concentration sensitivity of SLC16A7 arises from the strong inter-subunit cooperativity of the SLC16A7 dimer during transport. Inhibited by AR-C155858. Its function is as follows. Proton-coupled monocarboxylate symporter. Catalyzes the rapid transport across the plasma membrane of monocarboxylates such as L-lactate, pyruvate and ketone bodies, acetoacetate, beta-hydroxybutyrate and acetate. Dimerization is functionally required and both subunits work cooperatively in transporting substrate. In Mus musculus (Mouse), this protein is Monocarboxylate transporter 2 (Slc16a7).